Consider the following 288-residue polypeptide: ATP synthase gamma chain (288 aa).

This sequence belongs to the ATPase gamma chain family. In terms of assembly, F-type ATPases have 2 components, CF(1) - the catalytic core - and CF(0) - the membrane proton channel. CF(1) has five subunits: alpha(3), beta(3), gamma(1), delta(1), epsilon(1). CF(0) has three main subunits: a, b and c.

The protein resides in the cell inner membrane. Its function is as follows. Produces ATP from ADP in the presence of a proton gradient across the membrane. The gamma chain is believed to be important in regulating ATPase activity and the flow of protons through the CF(0) complex. The polypeptide is ATP synthase gamma chain (Aliivibrio fischeri (strain ATCC 700601 / ES114) (Vibrio fischeri)).